A 656-amino-acid polypeptide reads, in one-letter code: Phosphatidylinositol 4,5-bisphosphate-binding protein SLM2 (656 aa).

Residues 445–555 (FEVKSGFLEK…WFGNIKALSS (111 aa)) form the PH domain. Residues 577–605 (AKSNENTTESVTPQVTNEQHTRYDDVSSS) are disordered. Over residues 580–594 (NENTTESVTPQVTNE) the composition is skewed to polar residues. S626 is modified (phosphoserine). The PXIXIT-like, required for interaction with CNA1 and CNA2, and calcineurin-dependent dephosphorylation signature appears at 640–645 (PEFYIE). 2 positions are modified to phosphoserine: S649 and S653.

In terms of assembly, heterodimer of SLM1-SLM2. Binds phosphatidylinositol 4,5-bisphosphate, which is required for function. Interacts with the TORC2 subunits AVO2, BIT61 and TOR2. Interacts with the calcineurin catalytic subunits CNA1 and CNA2.

It localises to the cell membrane. Functionally, together with SLM1, effector of the TORC2- and calcineurin-signaling pathways. Phosphorylated and activated by TORC2 under favorable growth conditions. Mediates actin polarization via inhibition of calcineurin-dependent transcription. Upon nutrient limitation or environmental stress, gets dephosphorylated by calcineurin, inhibiting interaction with TORC2, thereby antagonizing TORC2 signaling and mediating calcineurin-dependent actin depolarization. Also functions in heat-induced, calcineurin-mediated uracil permease (FUR4) endocytosis. The chain is Phosphatidylinositol 4,5-bisphosphate-binding protein SLM2 (SLM2) from Saccharomyces cerevisiae (strain ATCC 204508 / S288c) (Baker's yeast).